Consider the following 379-residue polypeptide: Cobalt-precorrin-5B C(1)-methyltransferase (379 aa).

It belongs to the CbiD family.

The catalysed reaction is Co-precorrin-5B + S-adenosyl-L-methionine = Co-precorrin-6A + S-adenosyl-L-homocysteine. It participates in cofactor biosynthesis; adenosylcobalamin biosynthesis; cob(II)yrinate a,c-diamide from sirohydrochlorin (anaerobic route): step 6/10. Catalyzes the methylation of C-1 in cobalt-precorrin-5B to form cobalt-precorrin-6A. The polypeptide is Cobalt-precorrin-5B C(1)-methyltransferase (Salmonella choleraesuis (strain SC-B67)).